Here is a 506-residue protein sequence, read N- to C-terminus: MASSLLTSSVMIPTTGSTVVGRSVLPFQSSLHSLRLTHSYKNPALFISCCSSVSKNAATSSTDLKPVVERWPEYIPNKLPDGNYVRVFDTTLRDGEQSPGGSLTPPQKLEIARQLAKLRVDIMEVGFPGSSEEELETIKTIAKTVGNEVDEETGYVPVICAIARCKHRDIEATWEALKYAKRPRILVFTSTSDIHMKYKLKKTQEEVIEMAVSSIRFAKSLGFNDIQFGCEDGGRSDKDFLCKILGEAIKAGVTVVTIGDTVGINMPHEYGELVTYLKANTPGIDDVVVAVHCHNDLGLATANSIAGIRAGARQVEVTINGIGERSGNASLEEVVMALKCRGAYVINGVYTKIDTRQIMATSKMVQEYTGLYVQAHKPIVGANCFVHESGIHQDGILKNRSTYEILSPEDIGIVKSQNSGLVLGKLSGRHAVKDRLKELGYELDDEKLNAVFSLFRDLTKNKKRITDADLKALVTSSDEISLEKLNGANGLKSNGYIPVPQVSSNV.

A chloroplast-targeting transit peptide spans 1–49; sequence MASSLLTSSVMIPTTGSTVVGRSVLPFQSSLHSLRLTHSYKNPALFISC. A Pyruvate carboxyltransferase domain is found at 85-359; it reads VRVFDTTLRD…YTKIDTRQIM (275 aa). Phosphoserine is present on Ser-98.

The protein belongs to the alpha-IPM synthase/homocitrate synthase family. Monomer. Requires Mn(2+) as cofactor. As to expression, highly expressed in leaves, flowers, roots and siliques. Not detected in flowers in PubMed:12432038.

The protein localises to the plastid. It is found in the chloroplast. It carries out the reaction an omega-(methylsulfanyl)-2-oxoalkanoate + acetyl-CoA + H2O = a 2-(omega-methylsulfanyl)alkylmalate + CoA + H(+). 1 mM DTT required for activity. Activated by ATP and inhibited by iodoacetamide. Functionally, determines the side chain length of aliphatic glucosinolate structures. Catalyzes exclusively the condensation reactions of both the first and second methionine carbon chain elongation. This Arabidopsis thaliana (Mouse-ear cress) protein is Methylthioalkylmalate synthase 1, chloroplastic (MAM1).